The primary structure comprises 456 residues: 3-isopropylmalate dehydratase large subunit (456 aa).

Residues C336, C396, and C399 each coordinate [4Fe-4S] cluster.

Belongs to the aconitase/IPM isomerase family. LeuC type 1 subfamily. In terms of assembly, heterodimer of LeuC and LeuD. It depends on [4Fe-4S] cluster as a cofactor.

The enzyme catalyses (2R,3S)-3-isopropylmalate = (2S)-2-isopropylmalate. It functions in the pathway amino-acid biosynthesis; L-leucine biosynthesis; L-leucine from 3-methyl-2-oxobutanoate: step 2/4. Its function is as follows. Catalyzes the isomerization between 2-isopropylmalate and 3-isopropylmalate, via the formation of 2-isopropylmaleate. The sequence is that of 3-isopropylmalate dehydratase large subunit from Staphylococcus saprophyticus subsp. saprophyticus (strain ATCC 15305 / DSM 20229 / NCIMB 8711 / NCTC 7292 / S-41).